Here is a 165-residue protein sequence, read N- to C-terminus: Protoporphyrinogen IX oxidase (165 aa).

Helical transmembrane passes span 26–46 (LHVI…RLFV), 77–97 (AMIA…IVDW), 99–119 (MLWP…HMWL), and 145–165 (PTLL…YWGF). His-27 contacts heme. Lys-105 serves as a coordination point for heme.

This sequence belongs to the HemJ family. As to quaternary structure, homodimer. The cofactor is heme b.

It localises to the cell membrane. It carries out the reaction protoporphyrinogen IX + 3 A = protoporphyrin IX + 3 AH2. The protein operates within porphyrin-containing compound metabolism; protoporphyrin-IX biosynthesis; protoporphyrin-IX from protoporphyrinogen-IX: step 1/1. Catalyzes the oxidation of protoporphyrinogen IX to protoporphyrin IX. Is involved in the biosynthesis of tetrapyrrole molecules like heme and chlorophyll. Does not use oxygen or artificial electron acceptors such as menadione or benzoquinone. This Cereibacter sphaeroides (strain ATCC 17023 / DSM 158 / JCM 6121 / CCUG 31486 / LMG 2827 / NBRC 12203 / NCIMB 8253 / ATH 2.4.1.) (Rhodobacter sphaeroides) protein is Protoporphyrinogen IX oxidase.